Reading from the N-terminus, the 64-residue chain is Large ribosomal subunit protein bL35 (64 aa).

Residues 1-22 (MPKMKSHTGMGKRVRVTGKGKI) are compositionally biased toward basic residues. The segment at 1–28 (MPKMKSHTGMGKRVRVTGKGKIVKQQAG) is disordered.

It belongs to the bacterial ribosomal protein bL35 family.

This chain is Large ribosomal subunit protein bL35, found in Salinispora tropica (strain ATCC BAA-916 / DSM 44818 / JCM 13857 / NBRC 105044 / CNB-440).